We begin with the raw amino-acid sequence, 310 residues long: MTTANQPICPSPAKWPSPAKLNLFLYITGQRADGYHQLQTLFQFLDYGDQLTIEPRDDNQIRLLTPIAGVENEQNLIVRAAKMLQKHPGNTPVPRGADISIDKCLPMGGGLGGGSSNAATVLVALNLLWQCGLTDEQLADLGLTLGADVPVFVRGHAAFAEGIGEKLQPAEPVEKWYLVIHPGVNIPTPIIFSDPELKRNTPIRPLAALLSTPYANDCEPIARKRFREVEQALSWLLEYAPSRLTGTGACVFAEFDTESSARQVLSIAPEWLHGFVARGVNVSPLHRVRSGKKLKAVSADNDLQRYVRSK.

Lys-20 is an active-site residue. An ATP-binding site is contributed by 106 to 116; sequence PMGGGLGGGSS. Asp-148 is a catalytic residue.

It belongs to the GHMP kinase family. IspE subfamily. Homodimer.

It carries out the reaction 4-CDP-2-C-methyl-D-erythritol + ATP = 4-CDP-2-C-methyl-D-erythritol 2-phosphate + ADP + H(+). The protein operates within isoprenoid biosynthesis; isopentenyl diphosphate biosynthesis via DXP pathway; isopentenyl diphosphate from 1-deoxy-D-xylulose 5-phosphate: step 3/6. In terms of biological role, catalyzes the phosphorylation of the position 2 hydroxy group of 4-diphosphocytidyl-2C-methyl-D-erythritol. This is 4-diphosphocytidyl-2-C-methyl-D-erythritol kinase from Yersinia pseudotuberculosis serotype O:3 (strain YPIII).